A 718-amino-acid polypeptide reads, in one-letter code: Catalase (718 aa).

Active-site residues include histidine 103 and asparagine 176. Residue tyrosine 390 coordinates heme.

The protein belongs to the catalase family. Heme serves as cofactor.

It localises to the peroxisome matrix. It carries out the reaction 2 H2O2 = O2 + 2 H2O. Catalyzes the degradation of hydrogen peroxide (H(2)O(2)) generated by peroxisomal oxidases to water and oxygen, thereby protecting cells from the toxic effects of hydrogen peroxide. The protein is Catalase (CAT1) of Blumeria hordei (Barley powdery mildew).